The chain runs to 262 residues: Putative hydro-lyase cu1581 (262 aa).

This sequence belongs to the D-glutamate cyclase family.

In Corynebacterium urealyticum (strain ATCC 43042 / DSM 7109), this protein is Putative hydro-lyase cu1581.